The following is a 134-amino-acid chain: Protein E6 (134 aa).

Zinc fingers lie at residues 15-51 (CLQC…CQIC) and 88-124 (CYYC…CYSC).

Belongs to the papillomaviridae E6 protein family. In terms of assembly, forms homodimers. Interacts with ubiquitin-protein ligase UBE3A/E6-AP; this interaction stimulates UBE3A ubiquitin activity. Interacts with host BAK1.

Its subcellular location is the host cytoplasm. The protein localises to the host nucleus. Plays a major role in the induction and maintenance of cellular transformation. E6 associates with host UBE3A/E6-AP ubiquitin-protein ligase and modulates its activity. Protects host keratinocytes from apoptosis by mediating the degradation of host BAK1. May also inhibit host immune response. In Bos taurus (Bovine), this protein is Protein E6.